Here is a 1093-residue protein sequence, read N- to C-terminus: Isomaltosyltransferase (1093 aa).

The signal sequence occupies residues 1–29 (MYVRNLTGSFRFSLSFLLCFCLFVPSIYA). The Nucleophile role is filled by Asp566. Glu569 is a catalytic residue. Residue Asp631 is the Proton donor of the active site. Positions 968 to 1091 (VEYEAEFGVQ…GINFDNIAIV (124 aa)) constitute a CBM6 domain.

It belongs to the glycosyl hydrolase 31 family.

Its subcellular location is the secreted. It catalyses the reaction 2 alpha-isomaltosyl-(1-&gt;4)-D-maltotriose = alpha-isomaltosyl-(1-&gt;3)-alpha-isomaltosyl-(1-&gt;4)-D-maltotriose + D-maltotriose. The enzyme catalyses alpha-isomaltosyl-(1-&gt;3)-alpha-isomaltosyl-(1-&gt;4)-D-maltotriose = cyclobis-(1-&gt;3)-alpha-D-isomaltosyl + D-maltotriose. Strongly inhibited by Hg(2+) and moderately inhibited by Cu(2+) and Pb(2+). Other metal ions, Tris and EDTA have almost no effects. Glycosyltransferase involved, together with CtsZ, in the conversion of alpha-1,4-glucan into a cyclic tetrasaccharide (CTS) constructed from four alpha-glucopyranosyl residues. Catalyzes the alpha-(1-&gt;3) transfer of the isomaltosyl moiety of alpha-isomaltosyl-(1-&gt;4)-D-maltotriose to another alpha-isomaltosyl-(1-&gt;4)-D-maltotriose, resulting in alpha-isomaltosyl-(1-&gt;3)-alpha-isomaltosyl-alpha-(1-&gt;4)-maltotriose formation. In addition, the enzyme catalyzes the intramolecular cyclization of the product, generating the cyclic tetrasaccharide cyclobis-(1-&gt;6)-alpha-nigerosyl. In Sporosarcina globispora (Bacillus globisporus), this protein is Isomaltosyltransferase.